We begin with the raw amino-acid sequence, 96 residues long: 5-hydroxytryptamine receptor 2B (96 aa).

The Extracellular segment spans residues cysteine 1–methionine 8. Asparagine 2 is a glycosylation site (N-linked (GlcNAc...) asparagine). A helical transmembrane segment spans residues leucine 9–leucine 30. Residues asparagine 24–tyrosine 28 carry the NPxxY motif; important for ligand-induced conformation changes and signaling motif. The Cytoplasmic segment spans residues phenylalanine 31–leucine 96. Cysteine 45 is lipidated: S-palmitoyl cysteine.

It belongs to the G-protein coupled receptor 1 family. In terms of assembly, interacts (via C-terminus) with MPDZ.

Its subcellular location is the cell membrane. It is found in the synapse. The protein localises to the synaptosome. G-protein coupled receptor for 5-hydroxytryptamine (serotonin). Also functions as a receptor for various ergot alkaloid derivatives and psychoactive substances. Ligand binding causes a conformation change that triggers signaling via guanine nucleotide-binding proteins (G proteins) and modulates the activity of downstream effectors. HTR2B is coupled to G(q)/G(11) G alpha proteins and activates phospholipase C-beta, releasing diacylglycerol (DAG) and inositol 1,4,5-trisphosphate (IP3) second messengers that modulate the activity of phosphatidylinositol 3-kinase and promote the release of Ca(2+) ions from intracellular stores, respectively. Beta-arrestin family members inhibit signaling via G proteins and mediate activation of alternative signaling pathways. Plays a role in the regulation of dopamine and 5-hydroxytryptamine release, 5-hydroxytryptamine uptake and in the regulation of extracellular dopamine and 5-hydroxytryptamine levels, and thereby affects neural activity. May play a role in the perception of pain. Plays a role in the regulation of behavior, including impulsive behavior. Required for normal proliferation of embryonic cardiac myocytes and normal heart development. Protects cardiomyocytes against apoptosis. Plays a role in the adaptation of pulmonary arteries to chronic hypoxia. Plays a role in vasoconstriction. Required for normal osteoblast function and proliferation, and for maintaining normal bone density. Required for normal proliferation of the interstitial cells of Cajal in the intestine. The polypeptide is 5-hydroxytryptamine receptor 2B (HTR2B) (Cavia porcellus (Guinea pig)).